The following is a 346-amino-acid chain: UDP-3-O-acylglucosamine N-acyltransferase (346 aa).

H253 (proton acceptor) is an active-site residue.

This sequence belongs to the transferase hexapeptide repeat family. LpxD subfamily. As to quaternary structure, homotrimer.

The catalysed reaction is a UDP-3-O-[(3R)-3-hydroxyacyl]-alpha-D-glucosamine + a (3R)-hydroxyacyl-[ACP] = a UDP-2-N,3-O-bis[(3R)-3-hydroxyacyl]-alpha-D-glucosamine + holo-[ACP] + H(+). Its pathway is bacterial outer membrane biogenesis; LPS lipid A biosynthesis. Its function is as follows. Catalyzes the N-acylation of UDP-3-O-acylglucosamine using 3-hydroxyacyl-ACP as the acyl donor. Is involved in the biosynthesis of lipid A, a phosphorylated glycolipid that anchors the lipopolysaccharide to the outer membrane of the cell. This chain is UDP-3-O-acylglucosamine N-acyltransferase, found in Rickettsia typhi (strain ATCC VR-144 / Wilmington).